The following is a 144-amino-acid chain: Putative pre-16S rRNA nuclease (144 aa).

This sequence belongs to the YqgF nuclease family.

The protein resides in the cytoplasm. In terms of biological role, could be a nuclease involved in processing of the 5'-end of pre-16S rRNA. This chain is Putative pre-16S rRNA nuclease, found in Mycoplasma mobile (strain ATCC 43663 / 163K / NCTC 11711) (Mesomycoplasma mobile).